A 602-amino-acid chain; its full sequence is Pentatricopeptide repeat-containing protein At5g11310, mitochondrial (602 aa).

The transit peptide at 1-35 directs the protein to the mitochondrion; that stretch reads MNSLFTAFRRNLLLNPNPHRNFFLHRLLSSSRRSS. 11 PPR repeats span residues 134 to 165, 172 to 202, 211 to 241, 249 to 283, 284 to 318, 319 to 353, 354 to 388, 389 to 423, 424 to 458, 459 to 493, and 494 to 528; these read SPSLFDSVVNSLCKAREFEIAWSLVFDRVRSD, SADTFIVLIRRYARAGMVQQAIRAFEFARSY, ELRLLEVLLDALCKEGHVREASMYLERIGGT, SVRIFNILLNGWFRSRKLKQAEKLWEEMKAMNVKP, TVVTYGTLIEGYCRMRRVQIAMEVLEEMKMAEMEI, NFMVFNPIIDGLGEAGRLSEALGMMERFFVCESGP, TIVTYNSLVKNFCKAGDLPGASKILKMMMTRGVDP, TTTTYNHFFKYFSKHNKTEEGMNLYFKLIEAGHSP, DRLTYHLILKMLCEDGKLSLAMQVNKEMKNRGIDP, DLLTTTMLIHLLCRLEMLEEAFEEFDNAVRRGIIP, and QYITFKMIDNGLRSKGMSDMAKRLSSLMSSLPHSK.

Belongs to the PPR family. P subfamily.

The protein resides in the mitochondrion. This Arabidopsis thaliana (Mouse-ear cress) protein is Pentatricopeptide repeat-containing protein At5g11310, mitochondrial.